The following is a 368-amino-acid chain: Alanine racemase 3 (368 aa).

Residue lysine 42 is the Proton acceptor; specific for D-alanine of the active site. Lysine 42 bears the N6-(pyridoxal phosphate)lysine mark. Position 141 (arginine 141) interacts with substrate. Residue tyrosine 262 is the Proton acceptor; specific for L-alanine of the active site. Methionine 310 lines the substrate pocket.

The protein belongs to the alanine racemase family. The cofactor is pyridoxal 5'-phosphate.

It catalyses the reaction L-alanine = D-alanine. The protein operates within amino-acid biosynthesis; D-alanine biosynthesis; D-alanine from L-alanine: step 1/1. Catalyzes the interconversion of L-alanine and D-alanine. May also act on other amino acids. The chain is Alanine racemase 3 (alr3) from Salmonella typhi.